We begin with the raw amino-acid sequence, 545 residues long: Probable protein kinase UbiB (545 aa).

The 379-residue stretch at 123–501 (DFDIVPLASA…RVRQHQSHYL (379 aa)) folds into the Protein kinase domain. ATP contacts are provided by residues 129-137 (LASASIAQV) and Lys-152. Residue Asp-287 is the Proton acceptor of the active site. Helical transmembrane passes span 498 to 518 (SHYL…VVLS) and 521 to 541 (EWDG…LVGW).

This sequence belongs to the ABC1 family. UbiB subfamily.

It is found in the cell inner membrane. Its pathway is cofactor biosynthesis; ubiquinone biosynthesis [regulation]. In terms of biological role, is probably a protein kinase regulator of UbiI activity which is involved in aerobic coenzyme Q (ubiquinone) biosynthesis. This is Probable protein kinase UbiB from Erwinia tasmaniensis (strain DSM 17950 / CFBP 7177 / CIP 109463 / NCPPB 4357 / Et1/99).